A 605-amino-acid chain; its full sequence is Elongation factor 4 (605 aa).

One can recognise a tr-type G domain in the interval 9–192; the sequence is GMIRNFCIIA…AIVARVPAPA (184 aa). Residues 21 to 26 and 139 to 142 each bind GTP; these read DHGKST and NKID.

Belongs to the TRAFAC class translation factor GTPase superfamily. Classic translation factor GTPase family. LepA subfamily.

It is found in the cell inner membrane. It carries out the reaction GTP + H2O = GDP + phosphate + H(+). Functionally, required for accurate and efficient protein synthesis under certain stress conditions. May act as a fidelity factor of the translation reaction, by catalyzing a one-codon backward translocation of tRNAs on improperly translocated ribosomes. Back-translocation proceeds from a post-translocation (POST) complex to a pre-translocation (PRE) complex, thus giving elongation factor G a second chance to translocate the tRNAs correctly. Binds to ribosomes in a GTP-dependent manner. This is Elongation factor 4 from Chlorobaculum tepidum (strain ATCC 49652 / DSM 12025 / NBRC 103806 / TLS) (Chlorobium tepidum).